A 368-amino-acid chain; its full sequence is Transcription factor TGA1 (368 aa).

Residues 53 to 65 (LDNNVSEDTSHGT) show a composition bias toward polar residues. Positions 53-83 (LDNNVSEDTSHGTAGTPHMFDQEASTSRHPD) are disordered. The bZIP domain occupies 82-145 (PDKIQRRLAQ…NGIDTNSLGF (64 aa)). 2 coiled-coil regions span residues 83–131 (DKIQ…RQQG) and 261–281 (NLKQ…EKLQ). The segment at 84–104 (KIQRRLAQNREAARKSRLRKK) is basic motif. The interval 110–124 (LETSRLKLIQLEQEL) is leucine-zipper. The DOG1 domain occupies 153 to 363 (IAAFEMEYGH…RALSSSWATR (211 aa)). An intrachain disulfide couples cysteine 260 to cysteine 266.

It belongs to the bZIP family. Binds DNA as a dimer. The reduced form interacts with NPR1. As to expression, predominantly expressed in roots.

It localises to the nucleus. In terms of biological role, transcriptional activator that binds specifically to the DNA sequence 5'-TGACG-3'. Recognizes ocs elements like the as-1 motif of the cauliflower mosaic virus 35S promoter. Binding to the as-1-like cis elements mediate auxin- and salicylic acid-inducible transcription. May be involved in the induction of the systemic acquired resistance (SAR) via its interaction with NPR1. Could also bind to the Hex-motif (5'-TGACGTGG-3') another cis-acting element found in plant histone promoters. The polypeptide is Transcription factor TGA1 (TGA1) (Arabidopsis thaliana (Mouse-ear cress)).